The following is a 120-amino-acid chain: Large ribosomal subunit protein uL22 (120 aa).

It belongs to the universal ribosomal protein uL22 family. As to quaternary structure, part of the 50S ribosomal subunit.

Functionally, this protein binds specifically to 23S rRNA; its binding is stimulated by other ribosomal proteins, e.g. L4, L17, and L20. It is important during the early stages of 50S assembly. It makes multiple contacts with different domains of the 23S rRNA in the assembled 50S subunit and ribosome. The globular domain of the protein is located near the polypeptide exit tunnel on the outside of the subunit, while an extended beta-hairpin is found that lines the wall of the exit tunnel in the center of the 70S ribosome. This Borreliella afzelii (strain PKo) (Borrelia afzelii) protein is Large ribosomal subunit protein uL22.